We begin with the raw amino-acid sequence, 241 residues long: Cytochrome b6-f complex iron-sulfur subunit 2, cyanelle (241 aa).

A cyanelle-targeting transit peptide spans 1–62 (MSAFACSAVA…AAKATTFSIS (62 aa)). A helical membrane pass occupies residues 83-103 (LLGAIAGPTIGAGGPFVSFLV). The Rieske domain maps to 127–223 (VEKWLETXKP…VNVLEDGVVA (97 aa)). Residues Cys-169, His-171, Cys-187, and His-190 each coordinate [2Fe-2S] cluster. Cys-174 and Cys-189 form a disulfide bridge.

This sequence belongs to the Rieske iron-sulfur protein family. The 4 large subunits of the cytochrome b6-f complex are cytochrome b6, subunit IV (17 kDa polypeptide, petD), cytochrome f and the Rieske protein, while the 4 small subunits are petG, petL, petM and petN. The complex functions as a dimer. The cofactor is [2Fe-2S] cluster.

The protein resides in the plastid. The protein localises to the cyanelle thylakoid membrane. The enzyme catalyses 2 oxidized [plastocyanin] + a plastoquinol + 2 H(+)(in) = 2 reduced [plastocyanin] + a plastoquinone + 4 H(+)(out). In terms of biological role, component of the cytochrome b6-f complex, which mediates electron transfer between photosystem II (PSII) and photosystem I (PSI), cyclic electron flow around PSI, and state transitions. This is Cytochrome b6-f complex iron-sulfur subunit 2, cyanelle (petC-2) from Cyanophora paradoxa.